A 121-amino-acid chain; its full sequence is Flagellar protein FliT (121 aa).

Residues 1-50 (MNNAPHLYFAWQQLVEKSQLMLRLATEEQWDELITSEMAYVNAVQEIAHL) form a required for homodimerization region. The fliD binding stretch occupies residues 60-98 (MQEQLRPMLRLILDNESKVKQLLQIRMDELAKLVGQSSV).

The protein belongs to the FliT family. As to quaternary structure, homodimer. Interacts with FliD and FlhC.

It is found in the cytoplasm. It localises to the cytosol. In terms of biological role, dual-function protein that regulates the transcription of class 2 flagellar operons and that also acts as an export chaperone for the filament-capping protein FliD. As a transcriptional regulator, acts as an anti-FlhDC factor; it directly binds FlhC, thus inhibiting the binding of the FlhC/FlhD complex to class 2 promoters, resulting in decreased expression of class 2 flagellar operons. As a chaperone, effects FliD transition to the membrane by preventing its premature polymerization, and by directing it to the export apparatus. The protein is Flagellar protein FliT of Escherichia coli (strain 55989 / EAEC).